A 320-amino-acid polypeptide reads, in one-letter code: Aspartate carbamoyltransferase catalytic subunit (320 aa).

Positions 57 and 58 each coordinate carbamoyl phosphate. Position 85 (lysine 85) interacts with L-aspartate. Positions 107, 141, and 144 each coordinate carbamoyl phosphate. L-aspartate is bound by residues arginine 174 and arginine 228. Carbamoyl phosphate contacts are provided by glycine 269 and proline 270.

Belongs to the aspartate/ornithine carbamoyltransferase superfamily. ATCase family. Heterododecamer (2C3:3R2) of six catalytic PyrB chains organized as two trimers (C3), and six regulatory PyrI chains organized as three dimers (R2).

The enzyme catalyses carbamoyl phosphate + L-aspartate = N-carbamoyl-L-aspartate + phosphate + H(+). It functions in the pathway pyrimidine metabolism; UMP biosynthesis via de novo pathway; (S)-dihydroorotate from bicarbonate: step 2/3. Catalyzes the condensation of carbamoyl phosphate and aspartate to form carbamoyl aspartate and inorganic phosphate, the committed step in the de novo pyrimidine nucleotide biosynthesis pathway. This chain is Aspartate carbamoyltransferase catalytic subunit, found in Mycobacterium ulcerans (strain Agy99).